A 457-amino-acid chain; its full sequence is ADP-dependent glucose/glucosamine kinase (457 aa).

The 453-residue stretch at 5–457 (TNWESLYEKA…SAFVSEFSLH (453 aa)) folds into the ADPK domain. Residues aspartate 37, glutamate 91, 115–116 (GQ), and histidine 179 contribute to the D-glucose site. A Mg(2+)-binding site is contributed by glutamate 269. Asparagine 295 is an ADP binding site. Residue glutamate 298 participates in Mg(2+) binding. ADP-binding positions include 345–346 (HT), valine 432, and glycine 442. D-glucose is bound at residue aspartate 443. Residue aspartate 443 participates in Mg(2+) binding. Aspartate 443 (proton acceptor) is an active-site residue.

Belongs to the ADP-dependent glucokinase family. The cofactor is Mg(2+).

It is found in the cytoplasm. It carries out the reaction D-glucose + ADP = D-glucose 6-phosphate + AMP + H(+). The catalysed reaction is D-glucosamine + ADP = D-glucosamine 6-phosphate + AMP + H(+). It functions in the pathway carbohydrate degradation; glycolysis. With respect to regulation, inhibited by 8-bromoadenosine phosphate (8-Br-AMP). Its function is as follows. Catalyzes the ADP-dependent phosphorylation of D-glucose to D-glucose 6-phosphate and glucosamine to glucosamine 6-phosphate. The protein is ADP-dependent glucose/glucosamine kinase of Pyrococcus horikoshii (strain ATCC 700860 / DSM 12428 / JCM 9974 / NBRC 100139 / OT-3).